Here is an 81-residue protein sequence, read N- to C-terminus: Small ribosomal subunit protein bS16 (81 aa).

This sequence belongs to the bacterial ribosomal protein bS16 family.

The chain is Small ribosomal subunit protein bS16 from Lachnospira eligens (strain ATCC 27750 / DSM 3376 / VPI C15-48 / C15-B4) (Eubacterium eligens).